A 76-amino-acid polypeptide reads, in one-letter code: Protein TraJ (76 aa).

The protein localises to the cytoplasm. In terms of biological role, this protein is essential for positively regulating the expression of transfer genes that are involved in the conjugal transfer of DNA between bacterial cells. This is Protein TraJ (traJ) from Escherichia coli.